The primary structure comprises 299 residues: 4-hydroxy-tetrahydrodipicolinate synthase (299 aa).

T51 serves as a coordination point for pyruvate. The Proton donor/acceptor role is filled by Y139. Catalysis depends on K167, which acts as the Schiff-base intermediate with substrate. Residue I209 participates in pyruvate binding.

The protein belongs to the DapA family. In terms of assembly, homotetramer; dimer of dimers.

The protein localises to the cytoplasm. It catalyses the reaction L-aspartate 4-semialdehyde + pyruvate = (2S,4S)-4-hydroxy-2,3,4,5-tetrahydrodipicolinate + H2O + H(+). The protein operates within amino-acid biosynthesis; L-lysine biosynthesis via DAP pathway; (S)-tetrahydrodipicolinate from L-aspartate: step 3/4. Catalyzes the condensation of (S)-aspartate-beta-semialdehyde [(S)-ASA] and pyruvate to 4-hydroxy-tetrahydrodipicolinate (HTPA). This chain is 4-hydroxy-tetrahydrodipicolinate synthase, found in Methylobacterium radiotolerans (strain ATCC 27329 / DSM 1819 / JCM 2831 / NBRC 15690 / NCIMB 10815 / 0-1).